Reading from the N-terminus, the 62-residue chain is Statherin (62 aa).

The N-terminal stretch at methionine 1–alanine 19 is a signal peptide. Positions aspartate 20 to lysine 25 are hydroxyapatite-binding; inhibits crystal growth. 2 positions are modified to phosphoserine: serine 21 and serine 22. Positions lysine 25–glutamine 56 form a cross-link, isoglutamyl lysine isopeptide (Lys-Gln); in form cyclo-statherin Q-37. A cross-link (isoglutamyl lysine isopeptide (Lys-Gln); in form cyclo-statherin Q-39) is located at residues lysine 25 to glutamine 58. The tract at residues glycine 38–phenylalanine 62 is hydrophobic; inhibits precipitation of calcium phosphate salts.

The protein belongs to the histatin/statherin family. In terms of processing, substrate for transglutaminase-2. More than 95% of the cyclized peptide is cyclo-statherin Q-37, and less than 5% is cyclo-statherin Q-39. Cyclized forms account for about 1% of total statherin in saliva. Post-translationally, sulfated on tyrosine residues. Secreted by parotid and submandibular glands.

It is found in the secreted. Salivary protein that stabilizes saliva supersaturated with calcium salts by inhibiting the precipitation of calcium phosphate salts. It also modulates hydroxyapatite crystal formation on the tooth surface. The chain is Statherin (STATH) from Homo sapiens (Human).